A 76-amino-acid chain; its full sequence is U-scoloptoxin(13)-Sm1a (76 aa).

The first 22 residues, 1–22 (MAYICAXTLAFLLCVNTGIIQA), serve as a signal peptide directing secretion.

Belongs to the scoloptoxin-13 family. Post-translationally, contains 4 disulfide bonds. As to expression, expressed by the venom gland.

The protein resides in the secreted. The sequence is that of U-scoloptoxin(13)-Sm1a from Scolopendra morsitans (Tanzanian blue ringleg centipede).